The chain runs to 587 residues: V-type proton ATPase catalytic subunit A (587 aa).

243–250 (GAFGCGKT) serves as a coordination point for ATP.

Belongs to the ATPase alpha/beta chains family. As to quaternary structure, V-ATPase is a heteromultimeric enzyme composed of a peripheral catalytic V1 complex (main components: subunits A, B, C, D, E, and F) attached to an integral membrane V0 proton pore complex (main component: the proteolipid protein).

It carries out the reaction ATP + H2O + 4 H(+)(in) = ADP + phosphate + 5 H(+)(out). In terms of biological role, catalytic subunit of the peripheral V1 complex of vacuolar ATPase. V-ATPase vacuolar ATPase is responsible for acidifying a variety of intracellular compartments in eukaryotic cells. The polypeptide is V-type proton ATPase catalytic subunit A (Cyanidium caldarium (Red alga)).